A 258-amino-acid chain; its full sequence is Transmembrane O-methyltransferase homolog (258 aa).

S-adenosyl-L-methionine is bound by residues Glu-104, 106–107, Ser-112, Glu-130, and Ser-160; that span reads GT.

It belongs to the class I-like SAM-binding methyltransferase superfamily. Cation-dependent O-methyltransferase family. As to quaternary structure, interacts with LHFPL5, PCDH15, TMC1, TMC2 and TMIE. Interacts directly with TMC1. The interaction of TOMT with TMC1 and TMC2 is required for the transportation of TMC1/2 into the stereocilia of hair cells.

The protein localises to the cytoplasm. It is found in the endoplasmic reticulum. The enzyme catalyses a catechol + S-adenosyl-L-methionine = a guaiacol + S-adenosyl-L-homocysteine + H(+). Its function is as follows. Catalyzes the O-methylation, and thereby the inactivation, of catecholamine neurotransmitters and catechol hormones. Required for auditory function. Component of the cochlear hair cell's mechanotransduction (MET) machinery. Involved in the assembly of the asymmetric tip-link MET complex. Required for transportation of TMC1 and TMC2 proteins into the mechanically sensitive stereocilia of the hair cells. The function in MET is independent of the enzymatic activity. This chain is Transmembrane O-methyltransferase homolog, found in Rattus norvegicus (Rat).